The chain runs to 348 residues: Nicotinate-nucleotide--dimethylbenzimidazole phosphoribosyltransferase (348 aa).

Glu315 (proton acceptor) is an active-site residue.

This sequence belongs to the CobT family.

The enzyme catalyses 5,6-dimethylbenzimidazole + nicotinate beta-D-ribonucleotide = alpha-ribazole 5'-phosphate + nicotinate + H(+). Its pathway is nucleoside biosynthesis; alpha-ribazole biosynthesis; alpha-ribazole from 5,6-dimethylbenzimidazole: step 1/2. Functionally, catalyzes the synthesis of alpha-ribazole-5'-phosphate from nicotinate mononucleotide (NAMN) and 5,6-dimethylbenzimidazole (DMB). The chain is Nicotinate-nucleotide--dimethylbenzimidazole phosphoribosyltransferase from Dechloromonas aromatica (strain RCB).